A 141-amino-acid polypeptide reads, in one-letter code: Large ribosomal subunit protein uL11 (141 aa).

It belongs to the universal ribosomal protein uL11 family. As to quaternary structure, part of the ribosomal stalk of the 50S ribosomal subunit. Interacts with L10 and the large rRNA to form the base of the stalk. L10 forms an elongated spine to which L12 dimers bind in a sequential fashion forming a multimeric L10(L12)X complex. Post-translationally, one or more lysine residues are methylated.

In terms of biological role, forms part of the ribosomal stalk which helps the ribosome interact with GTP-bound translation factors. In Streptococcus mutans serotype c (strain ATCC 700610 / UA159), this protein is Large ribosomal subunit protein uL11.